We begin with the raw amino-acid sequence, 192 residues long: Natural cytotoxicity triggering receptor 3 (192 aa).

Positions 1 to 18 (MAKVLLIVFIMVYAGSCA) are cleaved as a signal peptide. The region spanning 19–126 (IWVSQPPEIR…VGTGNGTRLV (108 aa)) is the Ig-like domain. The Extracellular segment spans residues 19-147 (IWVSQPPEIR…AEPERAAYTS (129 aa)). An intrachain disulfide couples Cys-39 to Cys-108. 2 N-linked (GlcNAc...) asparagine glycosylation sites follow: Asn-42 and Asn-121. The helical transmembrane segment at 148-168 (LLLRAGVYALSFLSVATGSVI) threads the bilayer. At 169–192 (YYQGKCLCHVGNTATPPTASEERF) the chain is on the cytoplasmic side.

It belongs to the natural cytotoxicity receptor (NCR) family. In terms of assembly, homodimer in the unliganted form. Interacts with CD3Z. Interacts with and is activated by binding to NCR3LG1. Interacts with and is activated by binding to BAG6. Interacts with and is inhibited by binding to LGALS3.

It localises to the cell membrane. In terms of biological role, cell membrane receptor of natural killer/NK cells that is activated by binding of extracellular ligands including BAG6 and NCR3LG1. Stimulates NK cells cytotoxicity toward neighboring cells producing these ligands. It controls, for instance, NK cells cytotoxicity against tumor cells. Engagement of NCR3 by BAG6 also promotes myeloid dendritic cells (DC) maturation, both through killing DCs that did not acquire a mature phenotype, and inducing the release by NK cells of TNFA and IFNG that promote DC maturation. The chain is Natural cytotoxicity triggering receptor 3 (Ncr3) from Rattus norvegicus (Rat).